A 1076-amino-acid chain; its full sequence is MIESILSGSVRYRWLVLFLTAVVAVIGAWQLNLLPIDVTPDITNKQVQINSVVPTMSPVEVEKRVTYPIETAIAGLNGVESTRSMSRNGFSQVTVIFKESANLYFMRQQVSERLAQARPNLPENVEPQMGPVSTGLGEVFHYSVEYQYPDGTGASIKDGEPGWQSDGSFLTERGERLDDRVSRLAYLRTVQDWIIRPQLRTTPGVADVDSLGGYVKQFVVEPDTGKMAAYGVSYADLARALEDTNLSVGANFIRRSGESYLVRADARIKSADEISRAVIAQRQNVPITVGQVARVKIGGELRSGAASRNGNETVVGSALMLVGANSRTVAQAVGDKLEQISKTLPPGVVIVPTLNRSQLVIATIETVAKNLIEGALLVVAILFALLGNWRAATIAALVIPLSLLVSAIGMNQFHISGNLMSLGALDFGLIIDGAVIIVENSLRRLAERQHREGRLLTLDERLQEVVQSSREMVRPTVYGQLVIFMVFLPCLTFQGVEGKMFSPMVITLMLALASAFVLSLTFVPAMVAVMLRKKVAETEVRVIVATKESYRPWLEHAVARPMPFIGAGIATVAVATVAFTFVGREFMPTLDELNLNLSSVRIPSTSIDQSVAIDLPLERAVLSLPEVQTVYSKAGTASLAADPMPPNASDNYIILKPKSEWPEGVTTKEQVIERIREKTAPMVGNNYDVTQPIEMRFNELIGGVRSDVAVKVYGENLDELAATAQRIAAVLKKTPGATDVRVPLTSGFPTFDIVFDRAAIARYGLTVKEVADTISTAMAGRPAGQIFDGDRRFDIVIRLPGEQRENLDVLGALPVMLPLSEGQARASVPLRQLVQFRFTQGLNEVSRDNGKRRVYVEANVGGRDLGSFVDDAAARIAKEVKLPPGMYIEWGGQFQNLQAATKRLAIIVPLCFILIAATLYMAIGSAALTATVLTAVPLALAGGVFALLLRGIPFSISAAVGFIAVSGVAVLNGLVLISAIRKRLDDGMAPDAAVIEGAMERVRPVLMTALVASLGFVPMAIATGTGAEVQKPLATVVIGGLVTATVLTLFVLPALCGIVLKRRTAGRPEAQAALEA.

Helical transmembrane passes span 14-34, 366-386, 390-410, 418-438, 475-495, 502-522, 561-581, 903-923, 928-948, 959-979, 1003-1023, and 1035-1055; these read WLVLFLTAVVAVIGAWQLNLL, TVAKNLIEGALLVVAILFALL, RAATIAALVIPLSLLVSAIGM, NLMSLGALDFGLIIDGAVIIV, PTVYGQLVIFMVFLPCLTFQG, SPMVITLMLALASAFVLSLTF, PMPFIGAGIATVAVATVAFTF, RLAIIVPLCFILIAATLYMAI, LTATVLTAVPLALAGGVFALL, AVGFIAVSGVAVLNGLVLISA, RPVLMTALVASLGFVPMAIAT, and TVVIGGLVTATVLTLFVLPAL.

This sequence belongs to the resistance-nodulation-cell division (RND) (TC 2.A.6) family.

The protein localises to the cell inner membrane. In terms of biological role, the products of the genes cnrA, cnrB, and cnrC are likely to form a membrane-bound protein complex catalyzing an energy-dependent efflux of Ni(2+) and Co(2+). The mechanism of action of the CnrCBA complex may be that of a proton/cation antiporter. The polypeptide is Nickel and cobalt resistance protein CnrA (cnrA) (Cupriavidus metallidurans (strain ATCC 43123 / DSM 2839 / NBRC 102507 / CH34) (Ralstonia metallidurans)).